An 89-amino-acid polypeptide reads, in one-letter code: Large ribosomal subunit protein bL27 (89 aa).

Positions 1 to 21 (MAHKKSGGSSSNGRDSESKRL) are disordered.

This sequence belongs to the bacterial ribosomal protein bL27 family.

The polypeptide is Large ribosomal subunit protein bL27 (Caulobacter vibrioides (strain NA1000 / CB15N) (Caulobacter crescentus)).